The sequence spans 83 residues: UPF0297 protein Moth_1643 (83 aa).

Belongs to the UPF0297 family.

The chain is UPF0297 protein Moth_1643 from Moorella thermoacetica (strain ATCC 39073 / JCM 9320).